Consider the following 470-residue polypeptide: Cysteine--tRNA ligase (470 aa).

C27 lines the Zn(2+) pocket. The short motif at 29-39 is the 'HIGH' region element; sequence PTVYNYIHIGN. The Zn(2+) site is built by C207, H232, and E236. The short motif at 264–268 is the 'KMSKS' region element; it reads KMSKS. K267 serves as a coordination point for ATP.

This sequence belongs to the class-I aminoacyl-tRNA synthetase family. Monomer. The cofactor is Zn(2+).

It is found in the cytoplasm. The catalysed reaction is tRNA(Cys) + L-cysteine + ATP = L-cysteinyl-tRNA(Cys) + AMP + diphosphate. The protein is Cysteine--tRNA ligase of Lachnoclostridium phytofermentans (strain ATCC 700394 / DSM 18823 / ISDg) (Clostridium phytofermentans).